The sequence spans 430 residues: Enolase (430 aa).

Gln-167 provides a ligand contact to (2R)-2-phosphoglycerate. The active-site Proton donor is Glu-209. Asp-245, Glu-286, and Asp-313 together coordinate Mg(2+). (2R)-2-phosphoglycerate is bound by residues Lys-338, Arg-367, Ser-368, and Lys-389. Lys-338 (proton acceptor) is an active-site residue.

Belongs to the enolase family. Requires Mg(2+) as cofactor.

It localises to the cytoplasm. The protein localises to the secreted. Its subcellular location is the cell surface. It carries out the reaction (2R)-2-phosphoglycerate = phosphoenolpyruvate + H2O. It functions in the pathway carbohydrate degradation; glycolysis; pyruvate from D-glyceraldehyde 3-phosphate: step 4/5. Catalyzes the reversible conversion of 2-phosphoglycerate (2-PG) into phosphoenolpyruvate (PEP). It is essential for the degradation of carbohydrates via glycolysis. This Parasynechococcus marenigrum (strain WH8102) protein is Enolase.